The following is a 502-amino-acid chain: D-alanine--D-alanyl carrier protein ligase (502 aa).

150–151 provides a ligand contact to ATP; the sequence is TS. A D-alanine-binding site is contributed by Asp-195. 290 to 295 is an ATP binding site; that stretch reads NTYGPT. Val-299 lines the D-alanine pocket. The ATP site is built by Asp-381 and Lys-490. A D-alanine-binding site is contributed by Lys-490.

It belongs to the ATP-dependent AMP-binding enzyme family. DltA subfamily.

It localises to the cytoplasm. It catalyses the reaction holo-[D-alanyl-carrier protein] + D-alanine + ATP = D-alanyl-[D-alanyl-carrier protein] + AMP + diphosphate. It participates in cell wall biogenesis; lipoteichoic acid biosynthesis. Its function is as follows. Catalyzes the first step in the D-alanylation of lipoteichoic acid (LTA), the activation of D-alanine and its transfer onto the D-alanyl carrier protein (Dcp) DltC. In an ATP-dependent two-step reaction, forms a high energy D-alanyl-AMP intermediate, followed by transfer of the D-alanyl residue as a thiol ester to the phosphopantheinyl prosthetic group of the Dcp. D-alanylation of LTA plays an important role in modulating the properties of the cell wall in Gram-positive bacteria, influencing the net charge of the cell wall. The chain is D-alanine--D-alanyl carrier protein ligase from Bacillus licheniformis (strain ATCC 14580 / DSM 13 / JCM 2505 / CCUG 7422 / NBRC 12200 / NCIMB 9375 / NCTC 10341 / NRRL NRS-1264 / Gibson 46).